The sequence spans 310 residues: Pyrimidine-specific ribonucleoside hydrolase RihA (310 aa).

His240 is a catalytic residue.

This sequence belongs to the IUNH family. RihA subfamily.

Its function is as follows. Hydrolyzes cytidine or uridine to ribose and cytosine or uracil, respectively. The protein is Pyrimidine-specific ribonucleoside hydrolase RihA of Photobacterium profundum (strain SS9).